Reading from the N-terminus, the 642-residue chain is Probable glutamate--tRNA ligase, cytoplasmic (642 aa).

152–154 (RFP) serves as a coordination point for L-glutamate. The short motif at 157–166 (PNGRLHIGHA) is the 'HIGH' region element. Residue His162 participates in ATP binding. L-glutamate contacts are provided by residues Asp188, 326 to 330 (YDFAC), and Arg344. ATP-binding positions include Glu347 and 382–386 (VLSKR). The short motif at 382–386 (VLSKR) is the 'KMSKS' region element.

The protein belongs to the class-I aminoacyl-tRNA synthetase family. Glutamate--tRNA ligase type 2 subfamily.

Its subcellular location is the cytoplasm. It catalyses the reaction tRNA(Glu) + L-glutamate + ATP = L-glutamyl-tRNA(Glu) + AMP + diphosphate. The protein is Probable glutamate--tRNA ligase, cytoplasmic of Encephalitozoon cuniculi (strain GB-M1) (Microsporidian parasite).